A 572-amino-acid polypeptide reads, in one-letter code: Periplasmic pectate lyase (572 aa).

The N-terminal stretch at M1–A23 is a signal peptide.

This sequence belongs to the polysaccharide lyase 2 family.

Its subcellular location is the periplasm. The catalysed reaction is Eliminative cleavage of (1-&gt;4)-alpha-D-galacturonan to give oligosaccharides with 4-deoxy-alpha-D-galact-4-enuronosyl groups at their non-reducing ends.. The protein operates within glycan metabolism; pectin degradation; 2-dehydro-3-deoxy-D-gluconate from pectin: step 2/5. The chain is Periplasmic pectate lyase (pelY) from Yersinia pseudotuberculosis serotype I (strain IP32953).